The following is a 957-amino-acid chain: Atromentin synthetase (957 aa).

The adenylation (A) domain stretch occupies residues 59-464 (SVQARTFQDF…SGRIKDTVIV (406 aa)). The region spanning 596 to 674 (TPSTDDEKAL…DLAKYVNGLV (79 aa)) is the Carrier domain. A thiolation and peptide carrier (T) domain region spans residues 601 to 671 (DEKALAAIYA…IVSDLAKYVN (71 aa)). Residue S633 is modified to O-(pantetheine 4'-phosphoryl)serine. Residues 697-947 (PIFFVHPGVG…FDHVPQFQKI (251 aa)) are thioesterase (TE) domain.

This sequence belongs to the ATP-dependent AMP-binding enzyme family.

The protein operates within secondary metabolite biosynthesis. Its function is as follows. The L-tyrosine:2-oxoglutarate aminotransferase atrD and the atromentin synthetase atrA catalyze consecutive steps to turn over L-tyrosine into atromentin, which represents the generic precursor molecule for the entire terphenylquinone and pulvinic acid family of pigments, which are widely distributed secondary metabolites in homobasidiomycetes. The first step is catalyzed by atrD which converts L-tyrosine in to 4-hydroxyphenylpyruvate (4-HPP). Adenylation of two 4-HPP monomers by the atrA adenylation (A) domain, ester bond formation between monomers and atrA, and symmetric C-C-bond formation between two monomers by atrA leads to atromentin. This Tapinella panuoides (Oyster rollrim mushroom) protein is Atromentin synthetase.